Reading from the N-terminus, the 174-residue chain is Chorion class CB protein M5H4 (174 aa).

An N-terminal signal peptide occupies residues 1–20 (MTTIVVLICASALFVQLAFS). The segment at 21–71 (QCLGRDPVIGFGGAYGSGWGGYDAISPYDGLGYGVPYSAGFIGLSPSNLAA) is left arm. The segment at 72 to 142 (SCGGALAVNS…GDGAIGIVSE (71 aa)) is central domain. The segment at 143–174 (APIVAPASIGYGQWPVNAGYKGIGPCGCGGLY) is right arm.

This sequence belongs to the chorion protein family.

In terms of biological role, this protein is one of many from the eggshell of the silk moth. In Bombyx mori (Silk moth), this protein is Chorion class CB protein M5H4.